Here is a 322-residue protein sequence, read N- to C-terminus: Picrinine-N-methytransferase (322 aa).

The interval 103 to 112 is SAM motif I; that stretch reads MLDVGCGLGG. The interval 166-174 is SAM motif II; that stretch reads GTFDLVFTI. Residues 193–202 form an SAM motif III region; sequence VAAPGAPVVI.

Belongs to the class I-like SAM-binding methyltransferase superfamily. gTMT family. In terms of assembly, homodimer. Accumulates in tissues actively synthesizing monoterpenoid indole alkaloids (MIAs) (at protein level). Mainly expressed in young leaves, but barely in roots and stems.

It is found in the cytoplasm. The protein localises to the cytosol. It carries out the reaction picrinine + S-adenosyl-L-methionine = ervincine + S-adenosyl-L-homocysteine + H(+). Its pathway is alkaloid biosynthesis; vindoline biosynthesis. Its function is as follows. S-adenosyl-L-methionine-dependent N-methyltransferase involved in the biosynthesis of biologically active monoterpenoid indole alkaloids (MIAs) natural products including vindoline. Catalyzes the conversion of picrinine to N-methylpicrinine (ervincine). Also accepts, with low efficiency, 21-hydroxycyclolochnericine and norajmaline as substrates. The polypeptide is Picrinine-N-methytransferase (Vinca minor (Common periwinkle)).